A 168-amino-acid chain; its full sequence is Cyclic pyranopterin monophosphate synthase (168 aa).

Substrate contacts are provided by residues 83–85 (LCH) and 121–122 (ME). Residue D136 is part of the active site.

The protein belongs to the MoaC family. As to quaternary structure, homohexamer; trimer of dimers.

It carries out the reaction (8S)-3',8-cyclo-7,8-dihydroguanosine 5'-triphosphate = cyclic pyranopterin phosphate + diphosphate. The protein operates within cofactor biosynthesis; molybdopterin biosynthesis. Its function is as follows. Catalyzes the conversion of (8S)-3',8-cyclo-7,8-dihydroguanosine 5'-triphosphate to cyclic pyranopterin monophosphate (cPMP). The sequence is that of Cyclic pyranopterin monophosphate synthase from Nostoc sp. (strain PCC 7120 / SAG 25.82 / UTEX 2576).